Reading from the N-terminus, the 167-residue chain is Small ribosomal subunit protein uS5 (167 aa).

The region spanning 12 to 75 (LQEKLIAVNR…EKARRNIVTV (64 aa)) is the S5 DRBM domain.

It belongs to the universal ribosomal protein uS5 family. As to quaternary structure, part of the 30S ribosomal subunit. Contacts proteins S4 and S8.

With S4 and S12 plays an important role in translational accuracy. Its function is as follows. Located at the back of the 30S subunit body where it stabilizes the conformation of the head with respect to the body. The sequence is that of Small ribosomal subunit protein uS5 from Shewanella baltica (strain OS223).